The primary structure comprises 150 residues: Macrodomain Ter protein (150 aa).

The protein belongs to the MatP family. In terms of assembly, homodimer.

Its subcellular location is the cytoplasm. Functionally, required for spatial organization of the terminus region of the chromosome (Ter macrodomain) during the cell cycle. Prevents early segregation of duplicated Ter macrodomains during cell division. Binds specifically to matS, which is a 13 bp signature motif repeated within the Ter macrodomain. This chain is Macrodomain Ter protein, found in Erwinia tasmaniensis (strain DSM 17950 / CFBP 7177 / CIP 109463 / NCPPB 4357 / Et1/99).